Here is a 280-residue protein sequence, read N- to C-terminus: Acyl-[acyl-carrier-protein]--UDP-N-acetylglucosamine O-acyltransferase (280 aa).

The protein belongs to the transferase hexapeptide repeat family. LpxA subfamily. As to quaternary structure, homotrimer.

Its subcellular location is the cytoplasm. It catalyses the reaction a (3R)-hydroxyacyl-[ACP] + UDP-N-acetyl-alpha-D-glucosamine = a UDP-3-O-[(3R)-3-hydroxyacyl]-N-acetyl-alpha-D-glucosamine + holo-[ACP]. It functions in the pathway glycolipid biosynthesis; lipid IV(A) biosynthesis; lipid IV(A) from (3R)-3-hydroxytetradecanoyl-[acyl-carrier-protein] and UDP-N-acetyl-alpha-D-glucosamine: step 1/6. Its function is as follows. Involved in the biosynthesis of lipid A, a phosphorylated glycolipid that anchors the lipopolysaccharide to the outer membrane of the cell. The chain is Acyl-[acyl-carrier-protein]--UDP-N-acetylglucosamine O-acyltransferase from Chlamydia trachomatis serovar L2 (strain ATCC VR-902B / DSM 19102 / 434/Bu).